A 182-amino-acid polypeptide reads, in one-letter code: Thioredoxin F-type, chloroplastic (182 aa).

The N-terminal 69 residues, Met-1 to Gly-69, are a transit peptide targeting the chloroplast. The 112-residue stretch at Pro-70–Ser-181 folds into the Thioredoxin domain. Residues Cys-106 and Cys-109 each act as nucleophile in the active site. Cys-106 and Cys-109 form a disulfide bridge.

This sequence belongs to the thioredoxin family. Plant F-type subfamily. As to quaternary structure, forms a complex with heterodimeric ferredoxin-thioredoxin reductase (FTR) and ferredoxin.

It is found in the plastid. The protein localises to the chloroplast. Its function is as follows. Participates in various redox reactions through the reversible oxidation of the active center dithiol to a disulfide. The F form is known to activate a number of enzymes of the photosynthetic carbon cycle. The sequence is that of Thioredoxin F-type, chloroplastic from Pisum sativum (Garden pea).